Consider the following 444-residue polypeptide: L-ornithine N(5)-monooxygenase (444 aa).

Residues 40–48 and Gln-59 contribute to the FAD site; that span reads ERQPAFGWH. Residue Lys-64 coordinates substrate. Val-125 contacts FAD. NADP(+)-binding positions include 211–214 and Arg-236; that span reads AGQS. Substrate-binding positions include 250-253 and Asn-280; that span reads NEIF. 280 to 282 is a binding site for NADP(+); the sequence is NYA. 408 to 410 is an FAD binding site; the sequence is RCC. Residues 420–432 show a composition bias toward basic residues; it reads SARRSKTGSRPRT. The tract at residues 420–444 is disordered; sequence SARRSKTGSRPRTMKAWPGPRTKND.

It belongs to the lysine N(6)-hydroxylase/L-ornithine N(5)-oxygenase family. FAD serves as cofactor.

It carries out the reaction L-ornithine + NADPH + O2 = N(5)-hydroxy-L-ornithine + NADP(+) + H2O. Its pathway is siderophore biosynthesis; ornibactin biosynthesis. Catalyzes the conversion of L-ornithine to N(5)-hydroxyornithine, the first step in the biosynthesis of all hydroxamate-containing siderophores, such as ornibactin. The sequence is that of L-ornithine N(5)-monooxygenase from Burkholderia cepacia (Pseudomonas cepacia).